A 298-amino-acid polypeptide reads, in one-letter code: Enoyl-CoA hydratase AFT6-1 (298 aa).

The tract at residues 1 to 39 (MTYSTTKSVAMNPDEDAPPSDINSSGRLMSHSEVEPRGN) is disordered.

It belongs to the enoyl-CoA hydratase/isomerase family.

The enzyme catalyses a (3S)-3-hydroxyacyl-CoA = a (2E)-enoyl-CoA + H2O. It carries out the reaction a 4-saturated-(3S)-3-hydroxyacyl-CoA = a (3E)-enoyl-CoA + H2O. It functions in the pathway mycotoxin biosynthesis. Enoyl-CoA hydratase; part of the gene clusters that mediate the biosynthesis of the host-selective toxins (HSTs) AF-toxins responsible for Alternaria black spot of strawberry disease by the strawberry pathotype. AF-toxin I and III are valine derivatives of 2,3-dyhydroxy-isovaleric acid and 2-hydroxy-isovaleric acid respectively, while AF II is an isoleucine derivative of 2-hydroxy-valeric acid. These derivatives are bound to a 9,10-epoxy-8-hydroxy-9-methyl-decatrienoic acid (EDA) moiety. On cellular level, AF-toxin affects plasma membrane of susceptible cells and cause a sudden increase in loss of K(+) after a few minutes of toxin treatment. The aldo-keto reductase AFTS1 catalyzes the conversion of 2-keto-isovaleric acid (2-KIV) to 2-hydroxy-isovaleric acid (2-HIV) by reduction of its ketone to an alcohol. The acyl-CoA ligase AFT1, the hydrolase AFT2 and the enoyl-CoA hydratases AFT3 and AFT6, but also the polyketide synthase AFT9, the acyl-CoA dehydrogenase AFT10, the cytochrome P450 monooxygenase AFT11 and the oxidoreductase AFT12 are all involved in the biosynthesis of the AK-, AF- and ACT-toxin common EDA structural moiety. The exact function of each enzyme, and of additional enzymes identified within the AF-toxin clusters have still to be determined. This is Enoyl-CoA hydratase AFT6-1 from Alternaria alternata (Alternaria rot fungus).